We begin with the raw amino-acid sequence, 196 residues long: Adenylate kinase (196 aa).

9 to 17 (GIPGVGKST) contributes to the ATP binding site.

The protein belongs to the archaeal adenylate kinase family.

The protein localises to the cytoplasm. The enzyme catalyses AMP + ATP = 2 ADP. This chain is Adenylate kinase, found in Thermococcus kodakarensis (strain ATCC BAA-918 / JCM 12380 / KOD1) (Pyrococcus kodakaraensis (strain KOD1)).